Here is a 204-residue protein sequence, read N- to C-terminus: Guanylate kinase (204 aa).

The region spanning 16-196 is the Guanylate kinase-like domain; the sequence is AKVIIFSAPS…AKAHALKVIK (181 aa). 23 to 30 provides a ligand contact to ATP; sequence APSGSGKS.

This sequence belongs to the guanylate kinase family.

The protein localises to the cytoplasm. The enzyme catalyses GMP + ATP = GDP + ADP. Functionally, essential for recycling GMP and indirectly, cGMP. This is Guanylate kinase from Bacteroides fragilis (strain ATCC 25285 / DSM 2151 / CCUG 4856 / JCM 11019 / LMG 10263 / NCTC 9343 / Onslow / VPI 2553 / EN-2).